The following is an 80-amino-acid chain: Large ribosomal subunit protein uL24 (80 aa).

Belongs to the universal ribosomal protein uL24 family. As to quaternary structure, part of the 50S ribosomal subunit.

One of two assembly initiator proteins, it binds directly to the 5'-end of the 23S rRNA, where it nucleates assembly of the 50S subunit. Functionally, one of the proteins that surrounds the polypeptide exit tunnel on the outside of the subunit. This Chlorobium phaeobacteroides (strain DSM 266 / SMG 266 / 2430) protein is Large ribosomal subunit protein uL24.